We begin with the raw amino-acid sequence, 130 residues long: Cytochrome b-c1 complex subunit 7 (130 aa).

The protein belongs to the UQCRB/QCR7 family. Component of the ubiquinol-cytochrome c oxidoreductase (cytochrome b-c1 complex, complex III, CIII), a multisubunit enzyme composed of 3 respiratory subunits cytochrome b, cytochrome c1 and Rieske protein, 2 core protein subunits, and additional low-molecular weight protein subunits. The complex exists as an obligatory dimer and forms supercomplexes (SCs) in the inner mitochondrial membrane with cytochrome c oxidase (complex IV, CIV).

The protein localises to the mitochondrion inner membrane. Functionally, component of the ubiquinol-cytochrome c oxidoreductase, a multisubunit transmembrane complex that is part of the mitochondrial electron transport chain which drives oxidative phosphorylation. The respiratory chain contains 3 multisubunit complexes succinate dehydrogenase (complex II, CII), ubiquinol-cytochrome c oxidoreductase (cytochrome b-c1 complex, complex III, CIII) and cytochrome c oxidase (complex IV, CIV), that cooperate to transfer electrons derived from NADH and succinate to molecular oxygen, creating an electrochemical gradient over the inner membrane that drives transmembrane transport and the ATP synthase. The cytochrome b-c1 complex catalyzes electron transfer from ubiquinol to cytochrome c, linking this redox reaction to translocation of protons across the mitochondrial inner membrane, with protons being carried across the membrane as hydrogens on the quinol. In the process called Q cycle, 2 protons are consumed from the matrix, 4 protons are released into the intermembrane space and 2 electrons are passed to cytochrome c. The chain is Cytochrome b-c1 complex subunit 7 from Schistosoma mansoni (Blood fluke).